The primary structure comprises 367 residues: Inner membrane amino-acid ABC transporter permease protein YhdY (367 aa).

At 1 to 36 the chain is on the cytoplasmic side; that stretch reads MTKVLLSHPPRPASHNSSRAMVWVRKNLFSSWSNSL. A helical transmembrane segment spans residues 37–57; sequence LTIGCIWLMWELIPPLLNWAF. At 58-99 the chain is on the periplasmic side; it reads LQANWVGSTRADCTKAGACWVFIHERFGQFMYGLYPHDQRWR. Residues 100–120 traverse the membrane as a helical segment; sequence INLALLIGLVSIAPMFWKILP. The Cytoplasmic portion of the chain corresponds to 121-125; it reads HRGRY. Residues 126–146 traverse the membrane as a helical segment; it reads IAAWAVIYPLIVWWLMYGGFF. The Periplasmic portion of the chain corresponds to 147–162; that stretch reads ALERVETRQWGGLTLT. An ABC transmembrane type-1 domain is found at 159–353; it reads LTLTLIIASV…IFCFSMSRYS (195 aa). Residues 163-183 traverse the membrane as a helical segment; the sequence is LIIASVGIAGALPWGILLALG. At 184–192 the chain is on the cytoplasmic side; sequence RRSHMPIVR. The helical transmembrane segment at 193 to 213 threads the bilayer; sequence ILSVIFIEFWRGVPLITVLFM. At 214 to 233 the chain is on the periplasmic side; that stretch reads SSVMLPLFMAEGTSIDKLIR. Residues 234–254 form a helical membrane-spanning segment; that stretch reads ALVGVILFQSAYVAEVVRGGL. Over 255-291 the chain is Cytoplasmic; that stretch reads QALPKGQYEAAESLALGYWKTQGLVILPQALKLVIPG. Residues 292 to 312 form a helical membrane-spanning segment; the sequence is LVNTIIALFKDTSLVIIIGLF. Over 313–326 the chain is Periplasmic; it reads DLFSSVQQATVDPA. The chain crosses the membrane as a helical span at residues 327–347; that stretch reads WLGMSTEGYVFAALIYWIFCF. At 348–367 the chain is on the cytoplasmic side; it reads SMSRYSQYLEKRFNTGRTPH.

This sequence belongs to the binding-protein-dependent transport system permease family. HisMQ subfamily.

It is found in the cell inner membrane. Probably part of the binding-protein-dependent transport system YdhWXYZ for an amino acid; probably responsible for the translocation of the substrate across the membrane. The polypeptide is Inner membrane amino-acid ABC transporter permease protein YhdY (yhdY) (Escherichia coli (strain K12)).